A 1639-amino-acid chain; its full sequence is Mediator of RNA polymerase II transcription subunit 14 (1639 aa).

The LXXLL motif 1 signature appears at 49-53 (LAELL). Disordered stretches follow at residues 561 to 586 (GQSP…GSDS) and 709 to 755 (LPQP…KTVH). Low complexity predominate over residues 575–586 (SAAGGPAPGSDS). The span at 711 to 721 (QPKPPQAPPTP) shows a compositional bias: pro residues. Over residues 722–748 (QQQQQQQQQQQQPGTSDAKSSGAGASA) the composition is skewed to low complexity. Positions 768 to 772 (LKRLL) match the LXXLL motif 2 motif. Disordered stretches follow at residues 1039–1243 (RRSQ…HHYT) and 1558–1639 (MQPG…GGPN). Gly residues-rich tracts occupy residues 1062–1088 (GNNG…GTGM) and 1122–1142 (IGGG…GQGG). Positions 1189 to 1201 (GPSSLSYMQSHTD) are enriched in polar residues. The span at 1219–1229 (PGMPRPSPRPG) shows a compositional bias: pro residues. A compositionally biased stretch (gly residues) spans 1558–1579 (MQPGGGPGVPGGPGGPMGGQIG). Over residues 1589 to 1603 (VGSSPSPMMHSPMQQ) the composition is skewed to low complexity. Over residues 1604–1639 (MGGGGPQPGAYGGMVGGPGGGPQSGGPVGGGPGGPN) the composition is skewed to gly residues.

Belongs to the Mediator complex subunit 14 family. Component of the Mediator complex.

The protein resides in the nucleus. Its function is as follows. Component of the Mediator complex, a coactivator involved in the regulated transcription of nearly all RNA polymerase II-dependent genes. Mediator functions as a bridge to convey information from gene-specific regulatory proteins to the basal RNA polymerase II transcription machinery. Mediator is recruited to promoters by direct interactions with regulatory proteins and serves as a scaffold for the assembly of a functional preinitiation complex with RNA polymerase II and the general transcription factors. The polypeptide is Mediator of RNA polymerase II transcription subunit 14 (MED14) (Anopheles gambiae (African malaria mosquito)).